Consider the following 290-residue polypeptide: MPSLKDLKNRIGSVKNTRKITKAMQMVAAAKLRRAQEAAEAARPYADRMAAVMAGLTAAAAGSDMAPRLLAGTGEDRRHLLVVMTSERGLAGGFNSSIVKLARLRLQELQAQGKQVSILTVGKKGREQLKREYGDLFVNHVDLSEVKRIGYDNARAIADEILDRFDNGEFDVATLFYNRFESVISQVPTARQVIPAVIEEGEAGASSLYDYEPDENAILNDLLPRSVATQVFAALLENAASEQGARMTAMDNATRNAGDMIDRLTTVYNRSRQAAITKELIEIISGAEAL.

Belongs to the ATPase gamma chain family. As to quaternary structure, F-type ATPases have 2 components, CF(1) - the catalytic core - and CF(0) - the membrane proton channel. CF(1) has five subunits: alpha(3), beta(3), gamma(1), delta(1), epsilon(1). CF(0) has three main subunits: a, b and c.

The protein resides in the cell inner membrane. In terms of biological role, produces ATP from ADP in the presence of a proton gradient across the membrane. The gamma chain is believed to be important in regulating ATPase activity and the flow of protons through the CF(0) complex. The sequence is that of ATP synthase gamma chain from Paracoccus denitrificans (strain Pd 1222).